Here is a 566-residue protein sequence, read N- to C-terminus: Arginine--tRNA ligase (566 aa).

Residues alanine 121–histidine 131 carry the 'HIGH' region motif.

The protein belongs to the class-I aminoacyl-tRNA synthetase family.

The protein resides in the cytoplasm. It catalyses the reaction tRNA(Arg) + L-arginine + ATP = L-arginyl-tRNA(Arg) + AMP + diphosphate. The polypeptide is Arginine--tRNA ligase (Methanococcus maripaludis (strain C5 / ATCC BAA-1333)).